A 149-amino-acid polypeptide reads, in one-letter code: Transthyretin (149 aa).

The signal sequence occupies residues 1 to 22 (MAFHSLLLLCLAGLAFVSETAA). C32 is subject to Sulfocysteine. K37 provides a ligand contact to L-thyroxine. E64 is modified (4-carboxyglutamate). Residues E76 and S139 each coordinate L-thyroxine.

This sequence belongs to the transthyretin family. In terms of assembly, homotetramer. Dimer of dimers. In the homotetramer, subunits assemble around a central channel that can accommodate two ligand molecules. Interacts with RBP4. Post-translationally, sulfonation of the reactive cysteine Cys-32 enhances the stability of the native conformation of TTR, avoiding misassembly of the protein leading to amyloid formation. In terms of tissue distribution, detected in liver.

It localises to the secreted. Thyroid hormone-binding protein. Probably transports thyroxine from the bloodstream to the brain. This chain is Transthyretin (TTR), found in Macropus giganteus (Eastern gray kangaroo).